Consider the following 323-residue polypeptide: tRNA U34 carboxymethyltransferase (323 aa).

Residues Lys-91, Trp-105, Lys-110, Gly-130, 181 to 182, Met-196, Tyr-200, and Arg-315 each bind carboxy-S-adenosyl-L-methionine; that span reads IE.

It belongs to the class I-like SAM-binding methyltransferase superfamily. CmoB family. In terms of assembly, homotetramer.

It catalyses the reaction carboxy-S-adenosyl-L-methionine + 5-hydroxyuridine(34) in tRNA = 5-carboxymethoxyuridine(34) in tRNA + S-adenosyl-L-homocysteine + H(+). Its function is as follows. Catalyzes carboxymethyl transfer from carboxy-S-adenosyl-L-methionine (Cx-SAM) to 5-hydroxyuridine (ho5U) to form 5-carboxymethoxyuridine (cmo5U) at position 34 in tRNAs. In Edwardsiella ictaluri (strain 93-146), this protein is tRNA U34 carboxymethyltransferase.